Here is a 287-residue protein sequence, read N- to C-terminus: Mitochondrial dicarboxylate carrier (287 aa).

Solcar repeat units lie at residues 7-87 (SRWY…MRDY), 100-187 (NKVL…AKQL), and 196-279 (DNIF…LRKH). 3 helical membrane-spanning segments follow: residues 9-29 (WYFGGLASCGAACCTHPLDLL), 62-81 (GLSASLCRQMTYSLTRFAIY), and 102-122 (VLLGGISGLTGGFVGTPADLV). Lysine 158 bears the N6-acetyllysine mark. The next 3 helical transmembrane spans lie at 162-181 (GATMASSRGALVTVGQLSCY), 202-222 (FVSSFIAGGCATFLCQPLDVL), and 254-274 (GLFPAGIRLIPHTVLTFMFLE).

Belongs to the mitochondrial carrier (TC 2.A.29) family. In terms of tissue distribution, expressed at very high levels in white adipose tissue. And at low levels in brown adipose tissue, kidney and liver.

Its subcellular location is the mitochondrion inner membrane. It carries out the reaction (S)-malate(in) + phosphate(out) = (S)-malate(out) + phosphate(in). The catalysed reaction is malonate(out) + (S)-malate(in) = malonate(in) + (S)-malate(out). The enzyme catalyses (S)-malate(in) + succinate(out) = (S)-malate(out) + succinate(in). It catalyses the reaction (S)-malate(in) + sulfate(out) = (S)-malate(out) + sulfate(in). It carries out the reaction malonate(out) + phosphate(in) = malonate(in) + phosphate(out). The catalysed reaction is succinate(out) + phosphate(in) = succinate(in) + phosphate(out). The enzyme catalyses sulfate(out) + phosphate(in) = sulfate(in) + phosphate(out). It catalyses the reaction malonate(out) + succinate(in) = malonate(in) + succinate(out). Its activity is regulated as follows. Regulated by circadian protein CLOCK (Circadian Locomotor Output Cycles Kaput). Functionally, catalyzes the electroneutral exchange or flux of physiologically important metabolites such as dicarboxylates (malonate, malate, succinate), inorganic sulfur-containing anions, and phosphate, across mitochondrial inner membrane. Plays an important role in gluconeogenesis, fatty acid metabolism, urea synthesis, and sulfur metabolism, particularly in liver, by supplying the substrates for the different metabolic processes. Regulates fatty acid release from adipocytes, and contributes to systemic insulin sensitivity. This is Mitochondrial dicarboxylate carrier from Mus musculus (Mouse).